The sequence spans 358 residues: DnaJ homolog subfamily B member 11 (358 aa).

Positions 1 to 22 (MAPQNLGTLCLLLLYLLGAAIA) are cleaved as a signal peptide. The 66-residue stretch at 25 to 90 (DFYKILGVPR…EKRKQYDTYG (66 aa)) folds into the J domain. T188 is subject to Phosphothreonine. N261 carries N-linked (GlcNAc...) asparagine glycosylation.

As to quaternary structure, part of a large chaperone multiprotein complex comprising DNAJB11, HSP90B1, HSPA5, HYOU, PDIA2, PDIA4, PDIA6, PPIB, SDF2L1, UGGT1 and very small amounts of ERP29, but not, or at very low levels, CALR nor CANX. Binds to denatured substrates in an ATP-independent manner. Interacts via the J domain with HSPA5 in an ATP-dependent manner. Contains high-mannose Endo H-sensitive carbohydrates. Post-translationally, cys-169, Cys-171, Cys-193 and Cys-196 form intramolecular disulfide bonds. The preferential partner for each Cys is not known. In terms of tissue distribution, pancreas.

The protein resides in the endoplasmic reticulum lumen. Functionally, as a co-chaperone for HSPA5 it is required for proper folding, trafficking or degradation of proteins. Binds directly to both unfolded proteins that are substrates for ERAD and nascent unfolded peptide chains, but dissociates from the HSPA5-unfolded protein complex before folding is completed. May help recruiting HSPA5 and other chaperones to the substrate. Stimulates HSPA5 ATPase activity. It is necessary for maturation and correct trafficking of PKD1. The sequence is that of DnaJ homolog subfamily B member 11 (DNAJB11) from Canis lupus familiaris (Dog).